Reading from the N-terminus, the 821-residue chain is Tip elongation aberrant protein Tea4 (821 aa).

Polar residues-rich tracts occupy residues 1–11 and 21–31; these read MLHMNSASSAD and DPTQQNDSTII. The segment at 1 to 36 is disordered; that stretch reads MLHMNSASSADSMEIMESHFDPTQQNDSTIIESRYS. Residue tyrosine 35 is modified to Phosphotyrosine. Position 36 is a phosphoserine (serine 36). The residue at position 40 (tyrosine 40) is a Phosphotyrosine. The segment at 51–79 is disordered; that stretch reads ISGENSEPQTVASQEISDSQEEDTTLTSS. Over residues 53–67 the composition is skewed to polar residues; sequence GENSEPQTVASQEIS. The SH3 domain occupies 130–191; it reads IDCNFVHAIR…PAEYIETPSE (62 aa). Disordered regions lie at residues 267-292, 333-352, 473-500, 529-570, and 664-697; these read LEIE…DHVT, SSTT…FSSA, DSFD…MPNN, SPRL…SSLL, and DASS…SFSS. Residues 268 to 282 are compositionally biased toward low complexity; the sequence is EIEFSDSSDSSLSAE. Over residues 283-292 the composition is skewed to basic and acidic residues; that stretch reads YRSESEDHVT. Composition is skewed to polar residues over residues 333–350 and 473–484; these read SSTT…SKFS and DSFDTSNVTQDA. Residues 527–821 are interaction with tea1; sequence LLSPRLYSSS…EMASLLNTNR (295 aa). The span at 529–541 shows a compositional bias: low complexity; sequence SPRLYSSSTPSSP. A compositionally biased stretch (basic and acidic residues) spans 554 to 563; that stretch reads ENRKQADKVE. Positions 599–821 are interaction with win1; that stretch reads KAFSQSSIDL…EMASLLNTNR (223 aa). Over residues 665–674 the composition is skewed to low complexity; that stretch reads ASSAIPSSSI. Residues 675–687 are compositionally biased toward basic and acidic residues; sequence SHDEDLLPRKNTE.

An essential component of the tea1 cell-end complex. Interacts with win1, tea1 and for3. Interacts with tip1 in the presence of tea1.

Its subcellular location is the cytoplasm. The protein localises to the cytoskeleton. Cell polarity factor essential for the bipolar localization and function of structures containing the cell-end marker tea1 during the normal cell cycle. Regulates cell polarity in complex with tea1 and together with the stress signaling MAPK cascade, contributes to cell polarity maintenance under stress conditions. Required for the localization of for3 at the cell tip specifically during initiation of bipolar growth. During the new end take off (NETO), formation of a protein complex that includes tea1, tea4 and for3 is necessary and sufficient for the establishment of cell polarity and localized actin assembly at new cell ends. The sequence is that of Tip elongation aberrant protein Tea4 from Schizosaccharomyces pombe (strain 972 / ATCC 24843) (Fission yeast).